The primary structure comprises 225 residues: Thymidylate kinase (225 aa).

An ATP-binding site is contributed by 9–16; sequence GIEGCGKT.

It belongs to the thymidylate kinase family.

It carries out the reaction dTMP + ATP = dTDP + ADP. In terms of biological role, phosphorylation of dTMP to form dTDP in both de novo and salvage pathways of dTTP synthesis. In Geobacter sp. (strain M21), this protein is Thymidylate kinase.